The chain runs to 304 residues: Mitochondrial RNA-splicing protein MRS4 (304 aa).

Solcar repeat units lie at residues alanine 21 to arginine 108, histidine 118 to phenylalanine 200, and tyrosine 207 to phenylalanine 300. 6 helical membrane-spanning segments follow: residues leucine 23–methionine 41, glycine 83–tyrosine 102, proline 120–asparagine 139, serine 175–tyrosine 194, proline 209–threonine 228, and glycine 275–alanine 288.

The protein belongs to the mitochondrial carrier (TC 2.A.29) family.

The protein resides in the mitochondrion inner membrane. Its function is as follows. MRS4 suppresses a mitochondrial splice defect in the first intron of the COB gene. It may act as a carrier, exerting its suppressor activity via modulation of solute concentrations in the mitochondrion (possibly of cations). Not essential. This chain is Mitochondrial RNA-splicing protein MRS4 (MRS4), found in Saccharomyces cerevisiae (strain ATCC 204508 / S288c) (Baker's yeast).